Reading from the N-terminus, the 185-residue chain is Protein E3 homolog (185 aa).

Residues 7–73 (TVNDAEIFSL…SNPPKWFKNY (67 aa)) enclose the Z-binding domain. A DRBM domain is found at 112–179 (NPCIVLNEYC…SKITMDEILD (68 aa)).

It belongs to the poxviridae E3 protein family.

Functionally, RNA-binding protein that plays a role in the inhibition of multiple cellular antiviral responses activated by double-stranded RNA (dsRNA), such as inhibition of PKR activation, necroptosis, and IFN-mediated antiviral activities. Recognizes and binds Z-RNA structures via its Z-binding domain and dsRNA via its DRBM domain: RNA-binding activity is required to escape host ZBP1-dependent necroptosis. Mechanistically, the Z-binding domain binds Z-RNAs that are produced during Yaba-like disease virus infection, thereby competing with Z-RNA detection by host ZBP1, suppressing ZBP1-dependent necroptosis. This is Protein E3 homolog from Yaba-like disease virus (YLDV).